The sequence spans 193 residues: ATP-dependent Clp protease proteolytic subunit 1 (193 aa).

Serine 98 (nucleophile) is an active-site residue. Residue histidine 123 is part of the active site.

The protein belongs to the peptidase S14 family. In terms of assembly, fourteen ClpP subunits assemble into 2 heptameric rings which stack back to back to give a disk-like structure with a central cavity, resembling the structure of eukaryotic proteasomes.

It localises to the cytoplasm. It carries out the reaction Hydrolysis of proteins to small peptides in the presence of ATP and magnesium. alpha-casein is the usual test substrate. In the absence of ATP, only oligopeptides shorter than five residues are hydrolyzed (such as succinyl-Leu-Tyr-|-NHMec, and Leu-Tyr-Leu-|-Tyr-Trp, in which cleavage of the -Tyr-|-Leu- and -Tyr-|-Trp bonds also occurs).. In terms of biological role, cleaves peptides in various proteins in a process that requires ATP hydrolysis. Has a chymotrypsin-like activity. Plays a major role in the degradation of misfolded proteins. This chain is ATP-dependent Clp protease proteolytic subunit 1, found in Bacillus anthracis.